A 103-amino-acid polypeptide reads, in one-letter code: Matrix Gla protein (103 aa).

Residues 1 to 19 form the signal peptide; sequence MKSLLLLSVLAALAVAALC. Residue Glu-21 is modified to 4-carboxyglutamate. Residues Ser-22, Ser-25, and Ser-28 each carry the phosphoserine modification. Residues 51–97 form the Gla domain; that stretch reads RAKAQERIRELNKPPYELNREACDDYKLCERYAMVYGYNAAYNRYFR. 4-carboxyglutamate is present on residues Glu-56, Glu-60, Glu-67, and Glu-71. Cys-73 and Cys-79 are disulfide-bonded.

This sequence belongs to the osteocalcin/matrix Gla protein family. Post-translationally, requires vitamin K-dependent gamma-carboxylation for its function.

The protein resides in the secreted. Associates with the organic matrix of bone and cartilage. Thought to act as an inhibitor of bone formation. The sequence is that of Matrix Gla protein (MGP) from Sus scrofa (Pig).